Consider the following 321-residue polypeptide: Hex-5-enoyl-[acyl-carrier protein] acetylenase (321 aa).

2 helical membrane passes run 36-56 and 62-82; these read FLLY…LLWW and VEIG…SVGL. A Histidine box-1 motif is present at residues 83 to 88; sequence HRYFAH. Residues 99–119 form a helical membrane-spanning segment; that stretch reads VILAILGCMGAQGPVVSWVAV. The Histidine box-2 signature appears at 120–124; that stretch reads HRRHH. The helical transmembrane segment at 188 to 208 threads the bilayer; the sequence is YVVWIVLGLLIPTILGGIIHG. Residues 269–273 carry the Histidine box-3 motif; sequence QNNHH.

This sequence belongs to the fatty acid desaturase type 2 family. It depends on Fe(2+) as a cofactor.

It is found in the membrane. It carries out the reaction 5-hexenoyl-[ACP] + 2 reduced [2Fe-2S]-[ferredoxin] + O2 + 2 H(+) = 5-hexynoyl-[ACP] + 2 oxidized [2Fe-2S]-[ferredoxin] + 2 H2O. It catalyses the reaction hexanoyl-[ACP] + 2 reduced [2Fe-2S]-[ferredoxin] + O2 + 2 H(+) = 5-hexenoyl-[ACP] + 2 oxidized [2Fe-2S]-[ferredoxin] + 2 H2O. Its function is as follows. Desaturase involved in the biosynthesis of jamaicamides, which show sodium channel blocking activity and fish toxicity. Catalyzes the conversion of 5-hexenoyl loaded onto the acyl carrier protein JamC (5-hexenoyl-JamC) to 5-hexynoyl-JamC. Can also catalyze the conversion of hexanoyl-JamC to 5-hexenoyl-JamC, but it cannot use free 5-hexenoic acid, 5-hexenoyl-CoA, 2-hexenoyl-JamC, 3-hexenoyl-JamC or 4-hexenoyl-JamC. Is specific for C(6) chains, and cannot use 4-pentenoyl-JamC, 6-heptenoyl-JamC or 7-octenoyl-JamC as substrate. The protein is Hex-5-enoyl-[acyl-carrier protein] acetylenase of Moorena producens (strain JHB).